Consider the following 296-residue polypeptide: Glycine--tRNA ligase alpha subunit (296 aa).

Belongs to the class-II aminoacyl-tRNA synthetase family. In terms of assembly, tetramer of two alpha and two beta subunits.

The protein resides in the cytoplasm. It catalyses the reaction tRNA(Gly) + glycine + ATP = glycyl-tRNA(Gly) + AMP + diphosphate. The protein is Glycine--tRNA ligase alpha subunit of Maricaulis maris (strain MCS10) (Caulobacter maris).